We begin with the raw amino-acid sequence, 456 residues long: MRAWEEFLLLQEKEIGVDTVNKWLRSLKVLCFDACNLYLEAKDSFQVTWFEEHIRHKVKASLINNNGKPIRVRVTSLDKSTPFKETQIQQEKTAYFTMKYGDIDPNMSFANFLVTPENDLPVRILQEFAKVSEQGKGFPFNPIYLFGPESSGKTHLMQAAVGGLREAGVKTLYVTSELFTEHLVSAIRSGEMQRFRAFYRNVEALFIEDIEVLSGKGATQEEFFHTFNSLHTEGKLIVISSTFAPGDLKAMEERLISRFEWGISIPVSPLIREGLKSFLERRTEKLNIRIEETALDFLIQALSSHVKSLLHALTTLAKRVAYKKLSHQMLYQGDIEALLHDVLQAAESIRLTPSGIVRATAQYYGVSPESVLGRSQSREYVLPRQVAMFLCRQKLSLSYVKIGEVFSRDHSTVISSIRAISQKLEEDDRECDVSRAIQELTKRLSSAYQSLDFIED.

Residues 1–68 form a domain I, interacts with DnaA modulators region; sequence MRAWEEFLLL…KASLINNNGK (68 aa). The segment at 68–101 is domain II; sequence KPIRVRVTSLDKSTPFKETQIQQEKTAYFTMKYG. A domain III, AAA+ region region spans residues 102–320; that stretch reads DIDPNMSFAN…HALTTLAKRV (219 aa). The ATP site is built by serine 150, glycine 152, lysine 153, and threonine 154. Positions 321–456 are domain IV, binds dsDNA; it reads AYKKLSHQML…AYQSLDFIED (136 aa).

The protein belongs to the DnaA family. As to quaternary structure, oligomerizes as a right-handed, spiral filament on DNA at oriC.

The protein localises to the cytoplasm. Functionally, plays an essential role in the initiation and regulation of chromosomal replication. ATP-DnaA binds to the origin of replication (oriC) to initiate formation of the DNA replication initiation complex once per cell cycle. Binds the DnaA box (a 9 base pair repeat at the origin) and separates the double-stranded (ds)DNA. Forms a right-handed helical filament on oriC DNA; dsDNA binds to the exterior of the filament while single-stranded (ss)DNA is stabiized in the filament's interior. The ATP-DnaA-oriC complex binds and stabilizes one strand of the AT-rich DNA unwinding element (DUE), permitting loading of DNA polymerase. After initiation quickly degrades to an ADP-DnaA complex that is not apt for DNA replication. Binds acidic phospholipids. This chain is Chromosomal replication initiator protein DnaA 1, found in Chlamydia trachomatis serovar D (strain ATCC VR-885 / DSM 19411 / UW-3/Cx).